We begin with the raw amino-acid sequence, 285 residues long: 2-dehydro-3-deoxyphosphooctonate aldolase (285 aa).

This sequence belongs to the KdsA family.

It is found in the cytoplasm. It catalyses the reaction D-arabinose 5-phosphate + phosphoenolpyruvate + H2O = 3-deoxy-alpha-D-manno-2-octulosonate-8-phosphate + phosphate. Its pathway is carbohydrate biosynthesis; 3-deoxy-D-manno-octulosonate biosynthesis; 3-deoxy-D-manno-octulosonate from D-ribulose 5-phosphate: step 2/3. It participates in bacterial outer membrane biogenesis; lipopolysaccharide biosynthesis. The protein is 2-dehydro-3-deoxyphosphooctonate aldolase of Acinetobacter baylyi (strain ATCC 33305 / BD413 / ADP1).